The sequence spans 325 residues: Probable cell division protein WhiA (325 aa).

Residues Ser-273–Asn-306 constitute a DNA-binding region (H-T-H motif).

The protein belongs to the WhiA family.

In terms of biological role, involved in cell division and chromosome segregation. The protein is Probable cell division protein WhiA of Frankia alni (strain DSM 45986 / CECT 9034 / ACN14a).